Reading from the N-terminus, the 1149-residue chain is MDALRKLSSLGRNQDKILDTASSSSYTEASVAEIPKASVETGGKDEASPSGLAPIKVRVSNDVGAEIEEKRGGDEESVGSGESFDSALERLAASSVTSFEPPSPVGSVGEQSQFAGGVSEDLEERGQEEYLYYDDYGDDGEVEKDGSEKDSTSSSSSSSSSECSSSASNTEDEMDISEYGASSERAMPLANPSGVTDEEEEDGKELKYNVERAVTAEENMPNGLKLGSEARGIASSSRGAELGNAFKDSREDHEVQEELTERSVKVAVENYDQEGEDADSTEIKKEFPRELTQSRTVIESPAYRFTSEPVDPALLELKSEKAQPNTQSFARIAEGESDADADADADDEDVESGDEHEDGYTEINIRQAAGKSESENESGNNPSLGPAGPSLISVLVRKTARRPASTAATDTQSSNAASSTQVAGTTDVNPSIEVNEVNETREKLQNIRVKFLRLVHRLGQSPQNVVVAQVLYRLGLAESLRGGSTRNHTRAFDFDRANAIAEEQEADNQEEELDFACTILVLGKTGVGKSATINSIFDEHKSVTNAYNPSTTNVYEVVGTMLGVKVRFVDTPGLLFSVADQRHNERIMGRVKKYIKKASPDIVLYFDRMDMQTREFGDVPLLRTITNVFGTAVWFNTIVVLTHASTAPPDGPNGTPMGYELFVAQRSHSVQQSIRQVAGDMRLQNPVSLVENHPACRANRNGQRVLPNGQIWKPHLMLLCFASKILAEANTLLKLQDTAAPGRPFGQRSRVPPLPFLLSSLLQSRAQLKLPDEQLDESDESDDDEEDEEEGDEYDDLPPFRSLSKEELEELSKDQRQEYAEELAVRERLFQKKQHREQLQRRKEMKKRATAMRKEGLSHPADEADDEAGQPAAVPVPMPDMALPPSFDSDNPTHRYRYLETANQWLVRPVLETHGWDHDAGYDGFNVEKMFVVKNKIPASISGQVTKDKKESQVNFEAAASLKHGEGKVTLTGFDVQTIGKDLAYTLRAETRFNNFKRNKTTAGVTATYLNDTIAAGVKLEDRILIGKRVKMVVNGGVLTGKGDKAFGGSLEATLRGKEYPLSRTLSTLGLSVMDWHGDLAIGGNLQSQFMVGKTMMVGRANLNNRGSGQVSIRASSSEQLQMVLIGIVPILRSLINCRFGFGGGQSSQ.

3 disordered regions span residues 1 to 206 (MDAL…GKEL), 219 to 292 (NMPN…RELT), and 315 to 431 (LELK…VNPS). Residues 131–142 (LYYDDYGDDGEV) are compositionally biased toward acidic residues. Positions 152–168 (TSSSSSSSSSECSSSAS) are enriched in low complexity. Acidic residues-rich tracts occupy residues 271-280 (YDQEGEDADS) and 335-357 (GESD…DEHE). The span at 406–429 (TAATDTQSSNAASSTQVAGTTDVN) shows a compositional bias: polar residues. Residues 514 to 743 (DFACTILVLG…KLQDTAAPGR (230 aa)) form the AIG1-type G domain. The tract at residues 523-530 (GKTGVGKS) is G1. Residue 526–531 (GVGKSA) participates in GTP binding. Residue S530 participates in Mg(2+) binding. Residues 550–554 (STTNV) form a G2 region. Residues 570–573 (DTPG) are G3. The segment at 642 to 645 (THAS) is G4. GTP is bound by residues H643 and 691 to 692 (EN). The G5 stretch occupies residues 691–693 (ENH). Disordered regions lie at residues 769–800 (KLPD…LPPF) and 833–869 (KQHR…DEAG). Acidic residues predominate over residues 773-796 (EQLDESDESDDDEEDEEEGDEYDD). Composition is skewed to basic and acidic residues over residues 833 to 842 (KQHREQLQRR) and 852 to 862 (MRKEGLSHPAD). The chain crosses the membrane as a helical span at residues 1123–1144 (MVLIGIVPILRSLINCRFGFGG).

The protein belongs to the TRAFAC class TrmE-Era-EngA-EngB-Septin-like GTPase superfamily. AIG1/Toc34/Toc159-like paraseptin GTPase family. TOC159 subfamily. In terms of assembly, part of the TOC core complex. Mg(2+) serves as cofactor.

It localises to the plastid. The protein resides in the chloroplast outer membrane. Its function is as follows. GTPase involved in protein precursor import into chloroplasts. Seems to recognize chloroplast-destined precursor proteins and regulate their presentation to the translocation channel through GTP hydrolysis. Probably specialized in the import of nuclear encoded non-photosynthetic preproteins from the cytoplasm to the chloroplast. The chain is Translocase of chloroplast 126, chloroplastic from Physcomitrium patens (Spreading-leaved earth moss).